The chain runs to 82 residues: Small ribosomal subunit protein bS16 (82 aa).

The protein belongs to the bacterial ribosomal protein bS16 family.

This is Small ribosomal subunit protein bS16 from Sodalis glossinidius (strain morsitans).